An 88-amino-acid chain; its full sequence is uncharacterized protein (88 aa).

Residues 39–63 form a dksA C4-type zinc finger; the sequence is CEECGAPIPQARREAIPGVRLCIHC.

This is an uncharacterized protein from Escherichia coli (strain K12).